We begin with the raw amino-acid sequence, 346 residues long: uncharacterized protein (346 aa).

Residues 321 to 346 (TPWGTHSVAGVGPPPYARSGPASATT) form a disordered region.

This is an uncharacterized protein from Mycobacterium tuberculosis (strain CDC 1551 / Oshkosh).